The primary structure comprises 129 residues: Large ribosomal subunit protein bL17 (129 aa).

Belongs to the bacterial ribosomal protein bL17 family. In terms of assembly, part of the 50S ribosomal subunit. Contacts protein L32.

This chain is Large ribosomal subunit protein bL17, found in Buchnera aphidicola subsp. Baizongia pistaciae (strain Bp).